The sequence spans 530 residues: Light-harvesting complex I LH38 proteins (530 aa).

It is found in the plastid. Its subcellular location is the chloroplast. The polypeptide is Light-harvesting complex I LH38 proteins (Euglena gracilis).